Reading from the N-terminus, the 194-residue chain is ATP-dependent Clp protease proteolytic subunit (194 aa).

Ser-97 functions as the Nucleophile in the catalytic mechanism. The active site involves His-122.

Belongs to the peptidase S14 family. As to quaternary structure, fourteen ClpP subunits assemble into 2 heptameric rings which stack back to back to give a disk-like structure with a central cavity, resembling the structure of eukaryotic proteasomes.

It localises to the cytoplasm. The enzyme catalyses Hydrolysis of proteins to small peptides in the presence of ATP and magnesium. alpha-casein is the usual test substrate. In the absence of ATP, only oligopeptides shorter than five residues are hydrolyzed (such as succinyl-Leu-Tyr-|-NHMec, and Leu-Tyr-Leu-|-Tyr-Trp, in which cleavage of the -Tyr-|-Leu- and -Tyr-|-Trp bonds also occurs).. In terms of biological role, cleaves peptides in various proteins in a process that requires ATP hydrolysis. Has a chymotrypsin-like activity. Plays a major role in the degradation of misfolded proteins. This is ATP-dependent Clp protease proteolytic subunit from Campylobacter jejuni subsp. jejuni serotype O:6 (strain 81116 / NCTC 11828).